Consider the following 465-residue polypeptide: Cytochrome P450 85A2 (465 aa).

The helical transmembrane segment at 2-22 threads the bilayer; the sequence is GIMMMILGLLVIIVCLCTALL. Residue cysteine 415 participates in heme binding. Residue cysteine 462 is the site of S-farnesyl cysteine attachment. The Farnesylation CAAX motif motif lies at 462 to 465; sequence CSPY.

This sequence belongs to the cytochrome P450 family. The cofactor is heme. In terms of processing, isoprenylated (farnesylated); this addition of a 15-carbon farnesyl isoprenoid to the carboxy terminus is required for endoplasmic reticulum localization and essential for the biosynthesis of brassinolide. In terms of tissue distribution, expressed in stems, hypocotyls, leaves, siliques, shoots, and roots, with a higher expression in apical shoots.

It localises to the membrane. Its subcellular location is the endoplasmic reticulum. The enzyme catalyses 6-deoxoteasterone + reduced [NADPH--hemoprotein reductase] + O2 = 6alpha-hydroxyteasterone + oxidized [NADPH--hemoprotein reductase] + H2O + H(+). It carries out the reaction 6alpha-hydroxytyphasterol + reduced [NADPH--hemoprotein reductase] + O2 = teasterone + oxidized [NADPH--hemoprotein reductase] + 2 H2O + H(+). It catalyses the reaction 3-dehydro-6-deoxoteasterone + reduced [NADPH--hemoprotein reductase] + O2 = 3-dehydro-6alpha-hydroxyteasterone + oxidized [NADPH--hemoprotein reductase] + H2O + H(+). The catalysed reaction is 3-dehydro-6alpha-hydroxyteasterone + reduced [NADPH--hemoprotein reductase] + O2 = 3-dehydroteasterone + oxidized [NADPH--hemoprotein reductase] + 2 H2O + H(+). The enzyme catalyses 6-deoxotyphasterol + reduced [NADPH--hemoprotein reductase] + O2 = 6alpha-hydroxytyphasterol + oxidized [NADPH--hemoprotein reductase] + H2O + H(+). It carries out the reaction 6alpha-hydroxytyphasterol + reduced [NADPH--hemoprotein reductase] + O2 = typhasterol + oxidized [NADPH--hemoprotein reductase] + 2 H2O + H(+). It catalyses the reaction 6-deoxocastasterone + reduced [NADPH--hemoprotein reductase] + O2 = 6alpha-hydroxycastasterone + oxidized [NADPH--hemoprotein reductase] + H2O + H(+). The catalysed reaction is 6alpha-hydroxycastasterone + reduced [NADPH--hemoprotein reductase] + O2 = castasterone + oxidized [NADPH--hemoprotein reductase] + 2 H2O + H(+). The enzyme catalyses 6-deoxo-28-norteasterone + 2 reduced [NADPH--hemoprotein reductase] + 2 O2 = 28-norteasterone + 2 oxidized [NADPH--hemoprotein reductase] + 3 H2O + 2 H(+). It carries out the reaction 6-deoxo-28-norteasterone + reduced [NADPH--hemoprotein reductase] + O2 = 6alpha-hydroxy-28-norteasterone + oxidized [NADPH--hemoprotein reductase] + H2O + H(+). It catalyses the reaction 6alpha-hydroxy-28-norteasterone + reduced [NADPH--hemoprotein reductase] + O2 = 28-norteasterone + oxidized [NADPH--hemoprotein reductase] + 2 H2O + H(+). The catalysed reaction is 6-deoxo-28-nortyphasterol + 2 reduced [NADPH--hemoprotein reductase] + 2 O2 = 28-nortyphasterol + 2 oxidized [NADPH--hemoprotein reductase] + 3 H2O + 2 H(+). The enzyme catalyses 6-deoxo-28-nortyphasterol + reduced [NADPH--hemoprotein reductase] + O2 = 6alpha-hydroxy-28-nortyphasterol + oxidized [NADPH--hemoprotein reductase] + H2O + H(+). It carries out the reaction 6alpha-hydroxy-28-nortyphasterol + reduced [NADPH--hemoprotein reductase] + O2 = 28-nortyphasterol + oxidized [NADPH--hemoprotein reductase] + 2 H2O + H(+). It catalyses the reaction 6-deoxo-28-norcastasterone + 2 reduced [NADPH--hemoprotein reductase] + 2 O2 = 28-norcastasterone + 2 oxidized [NADPH--hemoprotein reductase] + 3 H2O + 2 H(+). The catalysed reaction is 6-deoxo-28-norcastasterone + reduced [NADPH--hemoprotein reductase] + O2 = 6alpha-hydroxy-28-norcastasterone + oxidized [NADPH--hemoprotein reductase] + H2O + H(+). The enzyme catalyses 6alpha-hydroxy-28-norcastasterone + reduced [NADPH--hemoprotein reductase] + O2 = 28-norcastasterone + oxidized [NADPH--hemoprotein reductase] + 2 H2O + H(+). It carries out the reaction 3-dehydro-6-deoxo-28-norteasterone + 2 reduced [NADPH--hemoprotein reductase] + 2 O2 = 6-dehydro-28-norteasterone + 2 oxidized [NADPH--hemoprotein reductase] + 3 H2O + 2 H(+). It catalyses the reaction 3-dehydro-6-deoxo-28-norteasterone + reduced [NADPH--hemoprotein reductase] + O2 = 3-dehydro-6alpha-hydroxy-28-norteasterone + oxidized [NADPH--hemoprotein reductase] + H2O + H(+). The catalysed reaction is 3-dehydro-6alpha-hydroxy-28-norteasterone + reduced [NADPH--hemoprotein reductase] + O2 = 6-dehydro-28-norteasterone + oxidized [NADPH--hemoprotein reductase] + 2 H2O + H(+). The enzyme catalyses teasterone + reduced [NADPH--hemoprotein reductase] + O2 = 7-oxateasterone + oxidized [NADPH--hemoprotein reductase] + H2O + H(+). It carries out the reaction castasterone + reduced [NADPH--hemoprotein reductase] + O2 = brassinolide + oxidized [NADPH--hemoprotein reductase] + H2O + H(+). It catalyses the reaction typhasterol + reduced [NADPH--hemoprotein reductase] + O2 = 7-oxatyphasterol + oxidized [NADPH--hemoprotein reductase] + H2O + H(+). The catalysed reaction is 6-deoxocastasterone + 2 reduced [NADPH--hemoprotein reductase] + 2 O2 = castasterone + 2 oxidized [NADPH--hemoprotein reductase] + 3 H2O + 2 H(+). The enzyme catalyses 6-deoxoteasterone + 2 reduced [NADPH--hemoprotein reductase] + 2 O2 = teasterone + 2 oxidized [NADPH--hemoprotein reductase] + 3 H2O + 2 H(+). It carries out the reaction 6-deoxotyphasterol + 2 reduced [NADPH--hemoprotein reductase] + 2 O2 = typhasterol + 2 oxidized [NADPH--hemoprotein reductase] + 3 H2O + 2 H(+). It catalyses the reaction 3-dehydro-6-deoxoteasterone + 2 reduced [NADPH--hemoprotein reductase] + 2 O2 = 3-dehydroteasterone + 2 oxidized [NADPH--hemoprotein reductase] + 3 H2O + 2 H(+). It functions in the pathway plant hormone biosynthesis; brassinosteroid biosynthesis. Mediates Baeyer-Villiger oxidation and catalyzes the C6-oxidation step and lactonization in brassinosteroids biosynthesis. Converts 6-deoxocastasterone (6-deoxoCS) to castasterone (CS), and castasterone to brassinolide (BL). May also convert 6-deoxoteasterone (6-deoxoTE) to teasterone (TE), 3-dehydro-6-deoxoteasterone (6-deoxo3DT, 6-deoxo-3-DHT) to 3-dehydroteasterone (3DT, 3-DHT), and 6-deoxotyphasterol (6-deoxoTY) to typhasterol (TY). Also seems to be able to convert teasterone (TE) and typhasterol (TY) to 7-oxateasterone (7-OXTE) and 7-oxatyphasterol (7-OXTY), respectively. Catalyzes the conversion of 6-deoxo-28-norteasterone (6-deoxo-28-norTE) to 28-norteasterone (28-norTE), 6-deoxo-28-nordeoxoteasterone (6-deoxo-28-nor-3-DHT) to 28-nordeoxoteasterone (28-nor-3-DHT), 6-deoxo-28-nortyphasterol (6-deoxo-28-norTY) to 28-nortyphasterol (28-norTY) and 6-deoxo-28-norcastasterone (6-deoxo-28-norCS) to 28-norcastasterone (28-norCS). Involved in a negative regulation of responses to abscisic acid (ABA) and drought tolerance. This is Cytochrome P450 85A2 (CYP85A2) from Arabidopsis thaliana (Mouse-ear cress).